A 132-amino-acid chain; its full sequence is Fatty acid-binding protein, intestinal (132 aa).

N-acetylalanine is present on Ala-2. Residues Trp-83 and Arg-107 each contribute to the hexadecanoate site. Residues Trp-83 and Arg-107 each coordinate tetradecanoate.

It belongs to the calycin superfamily. Fatty-acid binding protein (FABP) family. Expressed in the small intestine and at much lower levels in the large intestine. Highest expression levels in the jejunum.

It is found in the cytoplasm. FABPs are thought to play a role in the intracellular transport of long-chain fatty acids and their acyl-CoA esters. FABP2 is probably involved in triglyceride-rich lipoprotein synthesis. Binds saturated long-chain fatty acids with a high affinity, but binds with a lower affinity to unsaturated long-chain fatty acids. FABP2 may also help maintain energy homeostasis by functioning as a lipid sensor. This is Fatty acid-binding protein, intestinal (FABP2) from Homo sapiens (Human).